The following is a 400-amino-acid chain: Enoyl-[acyl-carrier-protein] reductase [NADH] (400 aa).

Residues 48-53 (GSSSGY), 74-75 (FE), 111-112 (DA), and 139-140 (LA) contribute to the NAD(+) site. Tyrosine 225 provides a ligand contact to substrate. Tyrosine 235 (proton donor) is an active-site residue. Residues lysine 244 and 273-275 (VVT) contribute to the NAD(+) site.

Belongs to the TER reductase family. In terms of assembly, monomer.

The catalysed reaction is a 2,3-saturated acyl-[ACP] + NAD(+) = a (2E)-enoyl-[ACP] + NADH + H(+). The protein operates within lipid metabolism; fatty acid biosynthesis. Involved in the final reduction of the elongation cycle of fatty acid synthesis (FAS II). Catalyzes the reduction of a carbon-carbon double bond in an enoyl moiety that is covalently linked to an acyl carrier protein (ACP). In Shewanella woodyi (strain ATCC 51908 / MS32), this protein is Enoyl-[acyl-carrier-protein] reductase [NADH].